The sequence spans 171 residues: Adenine phosphoribosyltransferase (171 aa).

Belongs to the purine/pyrimidine phosphoribosyltransferase family. As to quaternary structure, homodimer.

It is found in the cytoplasm. The enzyme catalyses AMP + diphosphate = 5-phospho-alpha-D-ribose 1-diphosphate + adenine. The protein operates within purine metabolism; AMP biosynthesis via salvage pathway; AMP from adenine: step 1/1. Functionally, catalyzes a salvage reaction resulting in the formation of AMP, that is energically less costly than de novo synthesis. The chain is Adenine phosphoribosyltransferase from Halalkalibacterium halodurans (strain ATCC BAA-125 / DSM 18197 / FERM 7344 / JCM 9153 / C-125) (Bacillus halodurans).